The sequence spans 447 residues: 23S rRNA (uracil(1939)-C(5))-methyltransferase RlmD (447 aa).

Residues 7–66 (RKPLSQEPQKASIEALTHEGRGIAHVAGKTVFIDGALPGETVWFHYLRRRGKFDEGRVLE) form the TRAM domain. Positions 79, 85, 88, and 168 each coordinate [4Fe-4S] cluster. 6 residues coordinate S-adenosyl-L-methionine: glutamine 275, phenylalanine 304, asparagine 309, glutamate 325, aspartate 352, and aspartate 374. Cysteine 400 functions as the Nucleophile in the catalytic mechanism.

The protein belongs to the class I-like SAM-binding methyltransferase superfamily. RNA M5U methyltransferase family. RlmD subfamily.

The enzyme catalyses uridine(1939) in 23S rRNA + S-adenosyl-L-methionine = 5-methyluridine(1939) in 23S rRNA + S-adenosyl-L-homocysteine + H(+). Its function is as follows. Catalyzes the formation of 5-methyl-uridine at position 1939 (m5U1939) in 23S rRNA. The sequence is that of 23S rRNA (uracil(1939)-C(5))-methyltransferase RlmD from Nitrosococcus oceani (strain ATCC 19707 / BCRC 17464 / JCM 30415 / NCIMB 11848 / C-107).